The following is a 288-amino-acid chain: Syntaxin-1A (288 aa).

At Met-1–Lys-265 the chain is on the cytoplasmic side. A phosphoserine mark is found at Ser-14, Ser-64, and Ser-95. A coiled-coil region spans residues Asp-68–Ser-109. Ser-188 carries the phosphoserine; by DAPK1 modification. The 63-residue stretch at Leu-192 to Ala-254 folds into the t-SNARE coiled-coil homology domain. Residues Lys-252, Lys-253, and Lys-256 each participate in a glycyl lysine isopeptide (Lys-Gly) (interchain with G-Cter in SUMO) cross-link. A helical; Anchor for type IV membrane protein transmembrane segment spans residues Ile-266 to Ile-286. Residues Phe-287–Ala-288 are Extracellular-facing.

This sequence belongs to the syntaxin family. In terms of assembly, part of the SNARE core complex containing SNAP25, VAMP2 and STX1A; this complex constitutes the basic catalytic machinery of the complex neurotransmitter release apparatus. The SNARE complex interacts with CPLX1. Interacts with STXBP1. The interaction with STXBP1 promotes assembly of the SNARE complex. Interacts (via C-terminus) with KCNB1 (via C-terminus); the interaction increases in a calcium-dependent manner and induces a pore-independent enhancement of exocytosis in neuroendocrine cells, chromaffin cells, pancreatic beta cells and from the soma of dorsal root ganglia (DRG) neurons. Interacts with SYTL4. Interacts with STXBP6. Interacts with PLCL1 (via C2 domain). Interacts with OTOF. Interacts with LGI3. Interacts (via the H3 domain) with SLC6A4 (via the N-terminus); this interaction regulates SLC4A6 channel conductance in thalamocortical neurons. Interacts with SYT6 and SYT8; the interaction is Ca(2+)-dependent. Interacts with VAMP8. Interacts with SNAP23. Interacts with VAPA and SYBU. Interacts with PRRT2. Interacts with SEPT8. Interacts with STXBP5L. Interacts with synaptotagmin-1/SYT1. Interacts with SEPTIN5; in the cerebellar cortex. Interacts with SEPTIN4; in the striatum. Post-translationally, phosphorylated by CK2. Phosphorylation at Ser-188 by DAPK1 significantly decreases its interaction with STXBP1. Sumoylated, sumoylation is required for regulation of synaptic vesicle endocytosis.

The protein localises to the cytoplasmic vesicle. It localises to the secretory vesicle. Its subcellular location is the synaptic vesicle membrane. The protein resides in the cell membrane. It is found in the synapse. The protein localises to the synaptosome. Its function is as follows. Plays an essential role in hormone and neurotransmitter calcium-dependent exocytosis and endocytosis. Part of the SNARE (Soluble NSF Attachment Receptor) complex composed of SNAP25, STX1A and VAMP2 which mediates the fusion of synaptic vesicles with the presynaptic plasma membrane. STX1A and SNAP25 are localized on the plasma membrane while VAMP2 resides in synaptic vesicles. The pairing of the three SNAREs from the N-terminal SNARE motifs to the C-terminal anchors leads to the formation of the SNARE complex, which brings membranes into close proximity and results in final fusion. Participates in the calcium-dependent regulation of acrosomal exocytosis in sperm. Also plays an important role in the exocytosis of hormones such as insulin or glucagon-like peptide 1 (GLP-1). The sequence is that of Syntaxin-1A (STX1A) from Pongo abelii (Sumatran orangutan).